The sequence spans 192 residues: MIDGLIKKEFLAHKEALEKSLESLQEALKQSVHLLIETLENQGKILICGNGGSASDAQHFAAELTGRYKLERKGLSALSLSTDTSALTAIANDYGYEEVFARQVEALGVKNDVLIGISTSGNSKNVLKAYEKAKDLGVKTLSLAGRDGGKMKPLSDMALIVPSDDTPRIQEMHILMIHILCDCIERHFANKN.

Residues 35–192 (LIETLENQGK…CIERHFANKN (158 aa)) form the SIS domain. 50–52 (NGG) is a binding site for substrate. Residues His59 and Glu63 each contribute to the Zn(2+) site. Substrate contacts are provided by residues Glu63, 92–93 (ND), 118–120 (STS), Ser123, and Gln170. Zn(2+)-binding residues include Gln170 and His178.

This sequence belongs to the SIS family. GmhA subfamily. Homotetramer. The cofactor is Zn(2+).

The protein localises to the cytoplasm. It catalyses the reaction 2 D-sedoheptulose 7-phosphate = D-glycero-alpha-D-manno-heptose 7-phosphate + D-glycero-beta-D-manno-heptose 7-phosphate. The protein operates within carbohydrate biosynthesis; D-glycero-D-manno-heptose 7-phosphate biosynthesis; D-glycero-alpha-D-manno-heptose 7-phosphate and D-glycero-beta-D-manno-heptose 7-phosphate from sedoheptulose 7-phosphate: step 1/1. Functionally, catalyzes the isomerization of sedoheptulose 7-phosphate in D-glycero-D-manno-heptose 7-phosphate. The protein is Phosphoheptose isomerase of Helicobacter pylori (strain Shi470).